The primary structure comprises 445 residues: 6-phosphogluconate dehydrogenase, decarboxylating (445 aa).

NADP(+) is bound by residues 1–4 (AVMG), 22–24 (NRS), 63–65 (VKA), and Asn91. Substrate contacts are provided by residues Asn91 and 117-119 (SGG). Lys172 functions as the Proton acceptor in the catalytic mechanism. 175-176 (HN) serves as a coordination point for substrate. Catalysis depends on Glu179, which acts as the Proton donor. Tyr180, Lys249, Arg276, Arg434, and His440 together coordinate substrate.

This sequence belongs to the 6-phosphogluconate dehydrogenase family. As to quaternary structure, homodimer.

The enzyme catalyses 6-phospho-D-gluconate + NADP(+) = D-ribulose 5-phosphate + CO2 + NADPH. It participates in carbohydrate degradation; pentose phosphate pathway; D-ribulose 5-phosphate from D-glucose 6-phosphate (oxidative stage): step 3/3. Its function is as follows. Catalyzes the oxidative decarboxylation of 6-phosphogluconate to ribulose 5-phosphate and CO(2), with concomitant reduction of NADP to NADPH. The polypeptide is 6-phosphogluconate dehydrogenase, decarboxylating (gnd) (Citrobacter amalonaticus).